The sequence spans 246 residues: MKEFITKHRDKFQKISAISGAGISAESGIPTFRGSEGLWKNFRAEDLATPQAFSKNPKLVWEWYLWRRNIIETKRPNPGHFALVELERIHPDFFLITQNVDGLHSQAGSKKLTEIHGNIFINRCISCGQESKETISENTTPLPPQCQNCNSFLRPGVVWFGESYDDFKLNFSIQRMKHTDLLLVLGTSGSVSMPVYLAQIAKDSGALLVEINPERSSFSSSVDLFLQGKTGEVLPELIREILDNPS.

A Deacetylase sirtuin-type domain is found at 1-245; it reads MKEFITKHRD…ELIREILDNP (245 aa). 20-39 serves as a coordination point for NAD(+); the sequence is GAGISAESGIPTFRGSEGLW. Residues Tyr64 and Arg67 each coordinate substrate. 98 to 101 contacts NAD(+); the sequence is QNVD. The Proton acceptor role is filled by His116. Positions 124, 127, 146, and 149 each coordinate Zn(2+). Residues 186 to 188, 212 to 214, and Thr230 each bind NAD(+); these read GTS and NPE.

This sequence belongs to the sirtuin family. Class III subfamily. Requires Zn(2+) as cofactor.

Its subcellular location is the cytoplasm. The enzyme catalyses N(6)-acetyl-L-lysyl-[protein] + NAD(+) + H2O = 2''-O-acetyl-ADP-D-ribose + nicotinamide + L-lysyl-[protein]. It catalyses the reaction N(6)-succinyl-L-lysyl-[protein] + NAD(+) + H2O = 2''-O-succinyl-ADP-D-ribose + nicotinamide + L-lysyl-[protein]. In terms of biological role, NAD-dependent lysine deacetylase and desuccinylase that specifically removes acetyl and succinyl groups on target proteins. Modulates the activities of several proteins which are inactive in their acylated form. The polypeptide is NAD-dependent protein deacylase (Leptospira interrogans serogroup Icterohaemorrhagiae serovar copenhageni (strain Fiocruz L1-130)).